Consider the following 132-residue polypeptide: Small ribosomal subunit protein uS8c (132 aa).

Belongs to the universal ribosomal protein uS8 family. As to quaternary structure, part of the 30S ribosomal subunit.

The protein resides in the plastid. The protein localises to the chloroplast. In terms of biological role, one of the primary rRNA binding proteins, it binds directly to 16S rRNA central domain where it helps coordinate assembly of the platform of the 30S subunit. The sequence is that of Small ribosomal subunit protein uS8c (rps8) from Drimys granadensis.